Consider the following 1330-residue polypeptide: Protein PUTATIVE RECOMBINATION INITIATION DEFECT 1 (1330 aa).

The disordered stretch occupies residues 1310 to 1330; sequence REGRVSPIQEETRQMQTERIV.

In terms of assembly, interacts with SPO11-1. According to PubMed:28855712, may interact with SPO11-2; this is in contradiction with PubMed:9461215 which claims that it seems to not interact with SPO11-2. Binds to DFO, PRD3 and MTOPVIB. Facilitates an interaction between PRD3 and DFO. Expressed in flower buds.

It is found in the nucleus. Involved in DNA cleavage that forms the double-strand breaks (DSB) that initiate meiotic recombination. This Arabidopsis thaliana (Mouse-ear cress) protein is Protein PUTATIVE RECOMBINATION INITIATION DEFECT 1.